Reading from the N-terminus, the 424-residue chain is MLDVKLLRTQFQEVKEKLLQRGDDLANIDRFEQLDKERRRLIAQVEELKSKRNEVSQQIAVLKREKKDAESLIAEMREVGDRIKQMDEQIRQLEEELDSLLLSIPNVPHESVPVGQSEEDNVEVRRWGEPRSFSFEPKPHWDIADQLGLLDFERAAKVAGSRFVFYKGLGARLERALINFMLDIHLDEFGYQEVLPPYLVNRASMIGTGQLPKFAEDAFHLDNEDYFLIPTAEVPVTNLHRDEILTADDLPLYYAAYSACFRAEAGSAGRDTRGLIRQHQFNKVELVKFVKPEDSYDELEKLTHQAETILQRLGLPYRVVALCTGDLGFSAAKTYDIEVWLPSYGTYREISSCSNFEAFQARRANIRFRREPKAKPEYVHTLNGSGLAIGRTVAAILENYQQEDGSVVIPGALRPYMGNRDVIR.

Residue 231-233 (TAE) participates in L-serine binding. 262 to 264 (RAE) is an ATP binding site. Glu285 contacts L-serine. Residue 349-352 (EISS) participates in ATP binding. Position 385 (Ser385) interacts with L-serine.

The protein belongs to the class-II aminoacyl-tRNA synthetase family. Type-1 seryl-tRNA synthetase subfamily. Homodimer. The tRNA molecule binds across the dimer.

The protein resides in the cytoplasm. It catalyses the reaction tRNA(Ser) + L-serine + ATP = L-seryl-tRNA(Ser) + AMP + diphosphate + H(+). It carries out the reaction tRNA(Sec) + L-serine + ATP = L-seryl-tRNA(Sec) + AMP + diphosphate + H(+). The protein operates within aminoacyl-tRNA biosynthesis; selenocysteinyl-tRNA(Sec) biosynthesis; L-seryl-tRNA(Sec) from L-serine and tRNA(Sec): step 1/1. Catalyzes the attachment of serine to tRNA(Ser). Is also able to aminoacylate tRNA(Sec) with serine, to form the misacylated tRNA L-seryl-tRNA(Sec), which will be further converted into selenocysteinyl-tRNA(Sec). This Geobacillus thermodenitrificans (strain NG80-2) protein is Serine--tRNA ligase.